The sequence spans 334 residues: Holliday junction branch migration complex subunit RuvB (334 aa).

The large ATPase domain (RuvB-L) stretch occupies residues 1–181; sequence MQDRLISGTE…FGIVQRLEFY (181 aa). Residues Ile-20, Arg-21, Gly-62, Lys-65, Thr-66, Thr-67, 128–130, Arg-171, Tyr-181, and Arg-218 contribute to the ATP site; that span reads EDY. Thr-66 lines the Mg(2+) pocket. Residues 182-252 are small ATPAse domain (RuvB-S); that stretch reads SVEDLTHIVS…MAQRALDMLN (71 aa). Positions 255-334 are head domain (RuvB-H); the sequence is KAGLDTLDRR…FGMTPPEPKN (80 aa). DNA contacts are provided by Arg-310 and Arg-315.

It belongs to the RuvB family. Homohexamer. Forms an RuvA(8)-RuvB(12)-Holliday junction (HJ) complex. HJ DNA is sandwiched between 2 RuvA tetramers; dsDNA enters through RuvA and exits via RuvB. An RuvB hexamer assembles on each DNA strand where it exits the tetramer. Each RuvB hexamer is contacted by two RuvA subunits (via domain III) on 2 adjacent RuvB subunits; this complex drives branch migration. In the full resolvosome a probable DNA-RuvA(4)-RuvB(12)-RuvC(2) complex forms which resolves the HJ.

The protein resides in the cytoplasm. The catalysed reaction is ATP + H2O = ADP + phosphate + H(+). Its function is as follows. The RuvA-RuvB-RuvC complex processes Holliday junction (HJ) DNA during genetic recombination and DNA repair, while the RuvA-RuvB complex plays an important role in the rescue of blocked DNA replication forks via replication fork reversal (RFR). RuvA specifically binds to HJ cruciform DNA, conferring on it an open structure. The RuvB hexamer acts as an ATP-dependent pump, pulling dsDNA into and through the RuvAB complex. RuvB forms 2 homohexamers on either side of HJ DNA bound by 1 or 2 RuvA tetramers; 4 subunits per hexamer contact DNA at a time. Coordinated motions by a converter formed by DNA-disengaged RuvB subunits stimulates ATP hydrolysis and nucleotide exchange. Immobilization of the converter enables RuvB to convert the ATP-contained energy into a lever motion, pulling 2 nucleotides of DNA out of the RuvA tetramer per ATP hydrolyzed, thus driving DNA branch migration. The RuvB motors rotate together with the DNA substrate, which together with the progressing nucleotide cycle form the mechanistic basis for DNA recombination by continuous HJ branch migration. Branch migration allows RuvC to scan DNA until it finds its consensus sequence, where it cleaves and resolves cruciform DNA. The chain is Holliday junction branch migration complex subunit RuvB from Acinetobacter baumannii (strain AB307-0294).